We begin with the raw amino-acid sequence, 132 residues long: Thioredoxin H4-2 (132 aa).

One can recognise a Thioredoxin domain in the interval 18–130 (DFKGGNVHVI…LEKKVQALAD (113 aa)). Active-site nucleophile residues include cysteine 56 and cysteine 59. The cysteines at positions 56 and 59 are disulfide-linked.

This sequence belongs to the thioredoxin family. Plant H-type subfamily.

Its subcellular location is the cytoplasm. Its function is as follows. Probable thiol-disulfide oxidoreductase that may be involved in the redox regulation of a number of cytosolic enzymes. The sequence is that of Thioredoxin H4-2 from Oryza sativa subsp. japonica (Rice).